Reading from the N-terminus, the 990-residue chain is Serine/threonine-protein phosphatase 6 regulatory ankyrin repeat subunit B (990 aa).

ANK repeat units follow at residues 7 to 36, 40 to 69, 73 to 102, 106 to 135, 139 to 168, 172 to 201, 205 to 234, 238 to 267, 271 to 301, 305 to 334, 338 to 367, 371 to 400, 404 to 433, 437 to 466, 470 to 499, 531 to 560, 566 to 595, 599 to 628, 633 to 662, 666 to 695, 699 to 728, 732 to 761, 768 to 797, 800 to 829, 835 to 864, 868 to 898, 902 to 931, and 938 to 967; these read ADQPPLVQAIFSGDPEEIRMLIYKTEDVNA, EKRTPLHVASFLGDADIIELLILSGARVNA, MWLTPLHRAVASRSEEAVQVLIKHSADVNA, NWQTPLHVAAANKALKCAEIIIPMLSSVNV, GGRTALHHAALNGHVEMVNLLLAKGANINA, KDRRALHWAAYMGHLEVVALLINHGAEVTC, KGYTPLHAAASNGQINIVKHLLNLGVEIDE, YGNTALHIACYNGQDSVVNELIDYGANVNQ, NGFTPLHFAAASTHGALCLELLVNNGADVNI, DGKSPLHMTAVHGRFTRSQTLIQNGGEIDC, DGNTPLHVAARYGHELLINTLITSGADTAK, HNMFPLHLAALNAHSDCCRKLLSSGFEIDT, FGRTCLHAAAAGGNVECIKLLQSSGADFNK, RGRTPLHYAAANCHFHCIETLVTTGANINE, WGRTPLHYAAASDMDRKKNILGNSHENAEE, EGYNTVHYAAAYGHRQCLELLLEKNSNMFE, ATKSPLHLAAYNGHHQALEVLLQSLVDLDI, KGRTALDLAAFKGHAECVEALISQGASVTV, TKRTPLHASVINGHTPCLRLLLEVADNPDV, KGQTPLMLAVAYGHIDAVSLLLEKEASVDA, LGCTALHRGIMTGHEECVQMLLEKEVSILC, RGRTPLHFAAARGHATWLSELLQIALSEED, QGYTPLHWACYNGHENCIEVLLEQKFFRKF, NSFSPLHCAVINDHENCASMLIGAIDASIV, KGRTPLHAAAFADHVECLQLLLSHSAQVNA, AGKTALMMAAQNGHVGAVDFLVNIAKADLTL, DSNTSLHLASSKGHEKCALLILDKIQEQSL, and SLQTPLHIAARNGLKMVVEELLAKGACVLA.

Protein phosphatase 6 (PP6) holoenzyme is proposed to be a heterotrimeric complex formed by the catalytic subunit, a SAPS domain-containing subunit (PP6R) and an ankyrin repeat-domain containing regulatory subunit (ARS).

In terms of biological role, putative regulatory subunit of protein phosphatase 6 (PP6) that may be involved in the recognition of phosphoprotein substrates. The polypeptide is Serine/threonine-protein phosphatase 6 regulatory ankyrin repeat subunit B (ANKRD44) (Gallus gallus (Chicken)).